The sequence spans 501 residues: MRSSLAPGVWFLRAFSRDSWFRGFILLLTFLIYACYHMSRKPISIVKSRLHQNCSEMVRPVNDTHDLNDTTWCSWSPFDKDDYKELLGAVDNAFLVAYAIGMFISGIFGERLPLRYYLSAGMVLSGLFTSLFGLGYFWNIHMLWYFVLIQICNGLVQTTGWPSVVTCVGNWFGKGKRGFIMGIWNSHTSVGNILGSLIAGVWVNQHWGLSFIVPGIITAIMGVITFLFLIEYPEDVDCTPPRHHDDPEKEQDNPEDPVNSPYSSRESNVDIAASSSKEQGPEPEAISFLGALRIPGVIEFSLCLLFAKLVSYTFLYWLPLYIFNVAHFSAKEAGDLSTLFDVGGIIGGIMAGLISDYTNSRATTCCIMLILAAPMMFLYNYIGQNGITSSIVMLIICGVLVNGPYALITTAVSADLGTHESLKGNAKALSTVTAIIDGTGSIGAALGPLLAGLISPTGWNNVFYMLISADVLACLLLCRLVYKEILAWKTACGRSSGYKQI.

Residues serine 19–serine 39 traverse the membrane as a helical segment. Residues asparagine 53, asparagine 62, and asparagine 68 are each glycosylated (N-linked (GlcNAc...) asparagine). 5 helical membrane-spanning segments follow: residues glycine 88–phenylalanine 108, leucine 118–isoleucine 140, methionine 142–valine 164, phenylalanine 179–alanine 199, and serine 210–isoleucine 230. Basic and acidic residues predominate over residues proline 240–aspartate 252. The interval proline 240 to glutamate 266 is disordered. The next 6 membrane-spanning stretches (helical) occupy residues cysteine 303–phenylalanine 323, glycine 334–isoleucine 354, alanine 362–isoleucine 382, isoleucine 391–alanine 411, alanine 434–isoleucine 454, and valine 462–tyrosine 482.

Belongs to the major facilitator superfamily. Organophosphate:Pi antiporter (OPA) (TC 2.A.1.4) family. As to expression, highly expressed in bone marrow derived macrophages, and weakly in spleen.

Its subcellular location is the endoplasmic reticulum membrane. The enzyme catalyses D-glucose 6-phosphate(in) + phosphate(out) = D-glucose 6-phosphate(out) + phosphate(in). Inhibited by vanadate but not by chlorogenic acid. Inorganic phosphate and glucose-6-phosphate antiporter. May transport cytoplasmic glucose-6-phosphate into the lumen of the endoplasmic reticulum and translocate inorganic phosphate into the opposite direction. Independent of a lumenal glucose-6-phosphatase. May not play a role in homeostatic regulation of blood glucose levels. This is Glucose-6-phosphate exchanger SLC37A2 from Mus musculus (Mouse).